Here is a 316-residue protein sequence, read N- to C-terminus: MNTITTTNFNFPNQKSVYRGKVREVYNINDELLVMVATDRLSAFDVVLPEGIPYKGQILNQIATKFMELTQDIVPNWLIATPDPNVAVGHLCEPFKVEMVIRGYLSGHAAREYALGKRTICGVTMPEGLKENDQFPTPIITPTTKADNGSHDEDISRSAILAKNIVSEQDYLVLEKYTRDLYQRGTEIAASRGLILVDTKYEFGKTKDGKIVLIDEIHTPDSSRYFYAEGYQDRQNNEEEQKQLSKEFVRRWLIENGFQGQDGQEIPEMNQEYITSVSERYIELYENILGEKFVKADISSINDRIEKNVLEYLQNK.

The protein belongs to the SAICAR synthetase family.

It catalyses the reaction 5-amino-1-(5-phospho-D-ribosyl)imidazole-4-carboxylate + L-aspartate + ATP = (2S)-2-[5-amino-1-(5-phospho-beta-D-ribosyl)imidazole-4-carboxamido]succinate + ADP + phosphate + 2 H(+). Its pathway is purine metabolism; IMP biosynthesis via de novo pathway; 5-amino-1-(5-phospho-D-ribosyl)imidazole-4-carboxamide from 5-amino-1-(5-phospho-D-ribosyl)imidazole-4-carboxylate: step 1/2. This Flavobacterium psychrophilum (strain ATCC 49511 / DSM 21280 / CIP 103535 / JIP02/86) protein is Phosphoribosylaminoimidazole-succinocarboxamide synthase.